A 1403-amino-acid polypeptide reads, in one-letter code: Baculoviral IAP repeat-containing protein 1a (1403 aa).

BIR repeat units follow at residues 63 to 128 (RLKT…EFLQ), 162 to 228 (RLES…EFLQ), and 281 to 346 (RMDT…VFLQ). 4 residues coordinate Zn(2+): Cys315, Cys318, His335, and Cys342. The region spanning 464-758 (SVMCVEGETG…EFLAAMRLTE (295 aa)) is the NACHT domain. Lys476 is a binding site for ATP.

In terms of assembly, interacts (via NACHT domain) with APAF1 (via CARD and NACHT domains).

In terms of biological role, anti-apoptotic protein which acts by inhibiting the activities of CASP3, CASP7 and CASP9. Can inhibit the autocleavage of pro-CASP9 and cleavage of pro-CASP3 by CASP9. Capable of inhibiting CASP9 autoproteolysis at 'Asp-315' and decreasing the rate of auto proteolysis at 'Asp-330'. Acts as a mediator of neuronal survival in pathological conditions. Prevents motor-neuron apoptosis induced by a variety of signals. This is Baculoviral IAP repeat-containing protein 1a (Naip1) from Mus musculus (Mouse).